Reading from the N-terminus, the 220-residue chain is MVKSTSKTSTKETVTKQPTEEKPIQEKEELALETSSSSSDEEDEKDEDEIEGLAASDDEQSGTHKIKRLNPKKQANEKKSKDKKTLEEYSGIIYVSRLPHGFHEKELSKYFAQFGDLKEVRLARNKKTGNSRHYGFLEFVNKEDAMIAQESMNNYLLMGHLLQVRVLPKGAKIEKLYKYKKRVLVEKGITKPVKQLKDNMKQKHEERIKKLAKSGIEFKW.

The segment at 1–82 is disordered; sequence MVKSTSKTST…KQANEKKSKD (82 aa). The segment covering 9–30 has biased composition (basic and acidic residues); sequence STKETVTKQPTEEKPIQEKEEL. Residues 39–60 are compositionally biased toward acidic residues; the sequence is SDEEDEKDEDEIEGLAASDDEQ. An RRM domain is found at 91-169; the sequence is GIIYVSRLPH…HLLQVRVLPK (79 aa).

Component of the pre-66S ribosomal particle. Interacts with NOP7 and RRP1.

Its subcellular location is the cytoplasm. The protein localises to the nucleus. It localises to the nucleolus. Involved in the biogenesis of the 60S ribosomal subunit. Required for pre-rRNA processing and cytokinesis. Associates with the precursors of the 25S and 5.8S rRNAs. This Saccharomyces cerevisiae (strain ATCC 204508 / S288c) (Baker's yeast) protein is Ribosome biogenesis protein 15.